The primary structure comprises 352 residues: Sodium-lithium/proton antiporter (352 aa).

8 helical membrane-spanning segments follow: residues 11–31, 32–52, 61–81, 159–179, 216–236, 241–261, 271–291, and 317–337; these read ILLL…PVSV, PLII…WMQF, AVTI…TYAV, IPEY…FMLE, AQFL…FWIT, IVMS…SIVI, IVGD…LLAI, and IGLQ…VIAF.

This sequence belongs to the autoinducer-2 exporter (AI-2E) (TC 2.A.86) family.

Its subcellular location is the cell membrane. Its function is as follows. Catalyzes the pH-dependent efflux of sodium and lithium in exchange for external protons. The polypeptide is Sodium-lithium/proton antiporter (Halobacillus andaensis).